We begin with the raw amino-acid sequence, 358 residues long: 3-isopropylmalate dehydrogenase (358 aa).

An NAD(+)-binding site is contributed by 76–89 (GPRWDNLTGAERPE). Substrate-binding residues include Arg96, Arg106, Arg135, and Asp225. Residues Asp225, Asp249, and Asp253 each coordinate Mg(2+). 283–295 (GSAPDIAGQNKAN) contributes to the NAD(+) binding site.

This sequence belongs to the isocitrate and isopropylmalate dehydrogenases family. LeuB type 1 subfamily. As to quaternary structure, homodimer. Requires Mg(2+) as cofactor. The cofactor is Mn(2+).

The protein resides in the cytoplasm. It carries out the reaction (2R,3S)-3-isopropylmalate + NAD(+) = 4-methyl-2-oxopentanoate + CO2 + NADH. Its pathway is amino-acid biosynthesis; L-leucine biosynthesis; L-leucine from 3-methyl-2-oxobutanoate: step 3/4. Functionally, catalyzes the oxidation of 3-carboxy-2-hydroxy-4-methylpentanoate (3-isopropylmalate) to 3-carboxy-4-methyl-2-oxopentanoate. The product decarboxylates to 4-methyl-2 oxopentanoate. The chain is 3-isopropylmalate dehydrogenase from Oleidesulfovibrio alaskensis (strain ATCC BAA-1058 / DSM 17464 / G20) (Desulfovibrio alaskensis).